The chain runs to 909 residues: WD repeat-containing protein 20 homolog (909 aa).

Residues 58-132 (SPAQGKLGSD…SAGNNTVEAR (75 aa)) form a disordered region. 2 stretches are compositionally biased toward low complexity: residues 80–107 (GANT…AISN) and 115–127 (SHSN…AGNN). WD repeat units lie at residues 248–288 (IDKT…AATA), 321–362 (TDNC…GIAR), 363–402 (SYFG…VVAR), and 470–517 (ADRN…LRHP). 5 disordered regions span residues 458–483 (FEGF…FRSD), 554–628 (SGQA…AGSV), 661–699 (SDSI…NSGS), 720–739 (SEKK…RQHR), and 749–775 (NQHN…GHSS). Polar residues-rich tracts occupy residues 555 to 569 (GQAT…SCSP) and 595 to 606 (TANCTISSQSSP). Composition is skewed to low complexity over residues 612-628 (EAAT…AGSV) and 673-699 (GQRP…NSGS). The WD 5 repeat unit spans residues 856–893 (IAHERLTALIFREDCFLTACQDGFIYTWARPGHATHAT).

Component of the Usp12-46 deubiquitylase complex consisting of Usp12-46, Wdr20 and Uaf1; regulatory subunit that, together with Uaf1, stabilizes Usp12-46. The Usp12-46 deubiquitylase complex associates with arr/arrow; the interaction leads to deubiquitination and stabilization of arr/arrow.

Functionally, regulatory component of the Usp12-46 deubiquitylase complex. This complex deubiquitylates the wg/wingless-signaling receptor arr/arrow, which stabilizes the receptor and increases its concentration at the cell surface; this enhances the sensitivity of cells to wg/wingless-signal stimulation. This increases the amplitude and spatial range of the signaling response to the wg/wingless morphogen gradient, facilitating the precise concentration-dependent regulation of its target genes. Required for wg/wingless-mediated signaling in the wing imaginal disc and for wg/wingless-dependent regulation of intestinal stem cell proliferation. The polypeptide is WD repeat-containing protein 20 homolog (Drosophila melanogaster (Fruit fly)).